Here is a 395-residue protein sequence, read N- to C-terminus: 8-amino-7-oxononanoate synthase (395 aa).

Substrate is bound at residue lysine 24. Position 111–112 (111–112) interacts with pyridoxal 5'-phosphate; it reads GF. Residue histidine 136 participates in substrate binding. Pyridoxal 5'-phosphate-binding positions include serine 184, 209–212, and 240–243; these read DDAH and TLSK. Lysine 243 is subject to N6-(pyridoxal phosphate)lysine. Threonine 357 lines the substrate pocket.

Belongs to the class-II pyridoxal-phosphate-dependent aminotransferase family. BioF subfamily. As to quaternary structure, homodimer. It depends on pyridoxal 5'-phosphate as a cofactor.

The enzyme catalyses 6-carboxyhexanoyl-[ACP] + L-alanine + H(+) = (8S)-8-amino-7-oxononanoate + holo-[ACP] + CO2. It functions in the pathway cofactor biosynthesis; biotin biosynthesis. In terms of biological role, catalyzes the decarboxylative condensation of pimeloyl-[acyl-carrier protein] and L-alanine to produce 8-amino-7-oxononanoate (AON), [acyl-carrier protein], and carbon dioxide. The sequence is that of 8-amino-7-oxononanoate synthase from Treponema denticola (strain ATCC 35405 / DSM 14222 / CIP 103919 / JCM 8153 / KCTC 15104).